Here is a 177-residue protein sequence, read N- to C-terminus: Large ribosomal subunit protein uL6 (177 aa).

The protein belongs to the universal ribosomal protein uL6 family. In terms of assembly, part of the 50S ribosomal subunit.

In terms of biological role, this protein binds to the 23S rRNA, and is important in its secondary structure. It is located near the subunit interface in the base of the L7/L12 stalk, and near the tRNA binding site of the peptidyltransferase center. The chain is Large ribosomal subunit protein uL6 from Pseudomonas paraeruginosa (strain DSM 24068 / PA7) (Pseudomonas aeruginosa (strain PA7)).